A 500-amino-acid chain; its full sequence is ATP synthase subunit alpha (500 aa).

168-175 is an ATP binding site; the sequence is GDRQTGKT.

It belongs to the ATPase alpha/beta chains family. F-type ATPases have 2 components, CF(1) - the catalytic core - and CF(0) - the membrane proton channel. CF(1) has five subunits: alpha(3), beta(3), gamma(1), delta(1), epsilon(1). CF(0) has three main subunits: a(1), b(2) and c(9-12). The alpha and beta chains form an alternating ring which encloses part of the gamma chain. CF(1) is attached to CF(0) by a central stalk formed by the gamma and epsilon chains, while a peripheral stalk is formed by the delta and b chains.

It localises to the cell membrane. The catalysed reaction is ATP + H2O + 4 H(+)(in) = ADP + phosphate + 5 H(+)(out). In terms of biological role, produces ATP from ADP in the presence of a proton gradient across the membrane. The alpha chain is a regulatory subunit. The sequence is that of ATP synthase subunit alpha from Streptococcus suis (strain 98HAH33).